The sequence spans 303 residues: Aspartate carbamoyltransferase catalytic subunit (303 aa).

Residues R51 and T52 each coordinate carbamoyl phosphate. Position 80 (K80) interacts with L-aspartate. Carbamoyl phosphate-binding residues include R101, H129, and Q132. 2 residues coordinate L-aspartate: R162 and R221. Residues L260 and P261 each coordinate carbamoyl phosphate.

The protein belongs to the aspartate/ornithine carbamoyltransferase superfamily. ATCase family. In terms of assembly, heterooligomer of catalytic and regulatory chains.

It carries out the reaction carbamoyl phosphate + L-aspartate = N-carbamoyl-L-aspartate + phosphate + H(+). The protein operates within pyrimidine metabolism; UMP biosynthesis via de novo pathway; (S)-dihydroorotate from bicarbonate: step 2/3. In terms of biological role, catalyzes the condensation of carbamoyl phosphate and aspartate to form carbamoyl aspartate and inorganic phosphate, the committed step in the de novo pyrimidine nucleotide biosynthesis pathway. In Saccharolobus islandicus (strain M.16.4 / Kamchatka #3) (Sulfolobus islandicus), this protein is Aspartate carbamoyltransferase catalytic subunit.